Here is a 308-residue protein sequence, read N- to C-terminus: D-alanine--D-alanine ligase (308 aa).

The 198-residue stretch at 105-302 (KAIFRSLGLA…FPDLCDRILD (198 aa)) folds into the ATP-grasp domain. 133 to 188 (DLPFGLPCVVKPAGEGSSVGVHLVNAAAELGPACRDAAGYAGDVIVERYVKGTEVD) serves as a coordination point for ATP. Mg(2+)-binding residues include Asp-256, Glu-269, and Asn-271.

Belongs to the D-alanine--D-alanine ligase family. Requires Mg(2+) as cofactor. Mn(2+) is required as a cofactor.

The protein resides in the cytoplasm. The enzyme catalyses 2 D-alanine + ATP = D-alanyl-D-alanine + ADP + phosphate + H(+). Its pathway is cell wall biogenesis; peptidoglycan biosynthesis. Its function is as follows. Cell wall formation. This chain is D-alanine--D-alanine ligase, found in Anaeromyxobacter dehalogenans (strain 2CP-C).